Consider the following 350-residue polypeptide: Quinone oxidoreductase-like protein 2 (350 aa).

N6-acetyllysine is present on K36. K201 is modified (N6-succinyllysine). N6-acetyllysine is present on residues K302 and K328.

Belongs to the zinc-containing alcohol dehydrogenase family. Quinone oxidoreductase subfamily.

The chain is Quinone oxidoreductase-like protein 2 from Rattus norvegicus (Rat).